We begin with the raw amino-acid sequence, 203 residues long: MELDQDKKKETPEETENVNEVQLEKQNQDEETEAEAEEADKAILERSDSVKTECPPQAEKQNQDEETEAEAEEADKAILERSDSVKTECPPQAEKQIQEEKCETQEADRSEGTELGKLHSQLDQLPDNVMLAGVKIQAWWRGTLVRRTLLLAALNAWTIQCWWREAKARLQGRKLHEVMRYRLRNLNLKSISKRKQPNQSSFL.

Basic and acidic residues predominate over residues M1 to P12. Positions M1–E111 are disordered. A coiled-coil region spans residues E13–S82. Residues D29–E38 are compositionally biased toward acidic residues. The segment covering A39–K51 has biased composition (basic and acidic residues). Residues D64 to E73 show a composition bias toward acidic residues. Composition is skewed to basic and acidic residues over residues A74 to K86 and Q96 to E111. The 30-residue stretch at V129 to T158 folds into the IQ domain.

The protein is IQ domain-containing protein F3 (Iqcf3) of Mus musculus (Mouse).